The following is a 250-amino-acid chain: NADH-quinone oxidoreductase subunit C (250 aa).

The protein belongs to the complex I 30 kDa subunit family. In terms of assembly, NDH-1 is composed of 14 different subunits. Subunits NuoB, C, D, E, F, and G constitute the peripheral sector of the complex.

The protein resides in the cell inner membrane. It catalyses the reaction a quinone + NADH + 5 H(+)(in) = a quinol + NAD(+) + 4 H(+)(out). In terms of biological role, NDH-1 shuttles electrons from NADH, via FMN and iron-sulfur (Fe-S) centers, to quinones in the respiratory chain. The immediate electron acceptor for the enzyme in this species is believed to be ubiquinone. Couples the redox reaction to proton translocation (for every two electrons transferred, four hydrogen ions are translocated across the cytoplasmic membrane), and thus conserves the redox energy in a proton gradient. This chain is NADH-quinone oxidoreductase subunit C, found in Xylella fastidiosa (strain M23).